The primary structure comprises 492 residues: Glutamyl-tRNA(Gln) amidotransferase subunit A (492 aa).

Catalysis depends on charge relay system residues Lys78 and Ser158. Catalysis depends on Ser182, which acts as the Acyl-ester intermediate.

The protein belongs to the amidase family. GatA subfamily. As to quaternary structure, heterotrimer of A, B and C subunits.

The catalysed reaction is L-glutamyl-tRNA(Gln) + L-glutamine + ATP + H2O = L-glutaminyl-tRNA(Gln) + L-glutamate + ADP + phosphate + H(+). Functionally, allows the formation of correctly charged Gln-tRNA(Gln) through the transamidation of misacylated Glu-tRNA(Gln) in organisms which lack glutaminyl-tRNA synthetase. The reaction takes place in the presence of glutamine and ATP through an activated gamma-phospho-Glu-tRNA(Gln). The protein is Glutamyl-tRNA(Gln) amidotransferase subunit A of Rhodopseudomonas palustris (strain BisB5).